We begin with the raw amino-acid sequence, 534 residues long: CTP synthase (534 aa).

The interval 1–268 (MSVKYIFVTG…AKIVCKRLGL (268 aa)) is amidoligase domain. Residue S14 participates in CTP binding. UTP is bound at residue S14. 15–20 (GLGKGI) is a binding site for ATP. Y55 contacts L-glutamine. Residue D72 participates in ATP binding. The Mg(2+) site is built by D72 and E142. CTP contacts are provided by residues 149–151 (DIE), 189–194 (KTKPTQ), and K225. UTP-binding positions include 189 to 194 (KTKPTQ) and K225. The Glutamine amidotransferase type-1 domain maps to 293 to 534 (TIGLVGKYVE…VRAAYEYKTK (242 aa)). G355 is an L-glutamine binding site. C382 serves as the catalytic Nucleophile; for glutamine hydrolysis. L-glutamine-binding positions include 383 to 386 (LGMQ), E406, and R462. Active-site residues include H507 and E509.

Belongs to the CTP synthase family. As to quaternary structure, homotetramer.

It carries out the reaction UTP + L-glutamine + ATP + H2O = CTP + L-glutamate + ADP + phosphate + 2 H(+). It catalyses the reaction L-glutamine + H2O = L-glutamate + NH4(+). The enzyme catalyses UTP + NH4(+) + ATP = CTP + ADP + phosphate + 2 H(+). It functions in the pathway pyrimidine metabolism; CTP biosynthesis via de novo pathway; CTP from UDP: step 2/2. Allosterically activated by GTP, when glutamine is the substrate; GTP has no effect on the reaction when ammonia is the substrate. The allosteric effector GTP functions by stabilizing the protein conformation that binds the tetrahedral intermediate(s) formed during glutamine hydrolysis. Inhibited by the product CTP, via allosteric rather than competitive inhibition. Its function is as follows. Catalyzes the ATP-dependent amination of UTP to CTP with either L-glutamine or ammonia as the source of nitrogen. Regulates intracellular CTP levels through interactions with the four ribonucleotide triphosphates. The sequence is that of CTP synthase from Ruminiclostridium cellulolyticum (strain ATCC 35319 / DSM 5812 / JCM 6584 / H10) (Clostridium cellulolyticum).